A 203-amino-acid chain; its full sequence is Snake venom metalloproteinase fibrolase (203 aa).

Q1 bears the Pyrrolidone carboxylic acid mark. Positions 7 to 203 (RYVQLVIVAD…NNPQCILNKP (197 aa)) constitute a Peptidase M12B domain. 3 disulfide bridges follow: C118-C198, C158-C182, and C160-C165. H143 contributes to the Zn(2+) binding site. The active site involves E144. Residues H147 and H153 each coordinate Zn(2+).

Belongs to the venom metalloproteinase (M12B) family. P-I subfamily. As to quaternary structure, monomer. The cofactor is Zn(2+). In terms of tissue distribution, expressed by the venom gland.

The protein localises to the secreted. The enzyme catalyses Hydrolysis of 14-Ala-|-Leu-15 in insulin B chain and 413-Lys-|-Leu-414 in alpha-chain of fibrinogen.. Its activity is regulated as follows. Is inhibited by EDTA, o-phenanthroline and tetraethylenepentamine. Snake venom zinc metalloprotease that exhibits direct fibrinolytic activity. This is Snake venom metalloproteinase fibrolase from Agkistrodon contortrix contortrix (Southern copperhead).